The chain runs to 466 residues: Asparagine--tRNA ligase (466 aa).

This sequence belongs to the class-II aminoacyl-tRNA synthetase family. Homodimer.

The protein resides in the cytoplasm. The catalysed reaction is tRNA(Asn) + L-asparagine + ATP = L-asparaginyl-tRNA(Asn) + AMP + diphosphate + H(+). This chain is Asparagine--tRNA ligase, found in Xylella fastidiosa (strain 9a5c).